We begin with the raw amino-acid sequence, 116 residues long: Peptidyl-tRNA hydrolase (116 aa).

Belongs to the PTH2 family.

It localises to the cytoplasm. The catalysed reaction is an N-acyl-L-alpha-aminoacyl-tRNA + H2O = an N-acyl-L-amino acid + a tRNA + H(+). The natural substrate for this enzyme may be peptidyl-tRNAs which drop off the ribosome during protein synthesis. This chain is Peptidyl-tRNA hydrolase (pth), found in Methanococcus maripaludis (strain DSM 14266 / JCM 13030 / NBRC 101832 / S2 / LL).